The sequence spans 378 residues: Cobalt-precorrin-5B C(1)-methyltransferase (378 aa).

The protein belongs to the CbiD family.

It catalyses the reaction Co-precorrin-5B + S-adenosyl-L-methionine = Co-precorrin-6A + S-adenosyl-L-homocysteine. It participates in cofactor biosynthesis; adenosylcobalamin biosynthesis; cob(II)yrinate a,c-diamide from sirohydrochlorin (anaerobic route): step 6/10. Functionally, catalyzes the methylation of C-1 in cobalt-precorrin-5B to form cobalt-precorrin-6A. In Thermoplasma volcanium (strain ATCC 51530 / DSM 4299 / JCM 9571 / NBRC 15438 / GSS1), this protein is Cobalt-precorrin-5B C(1)-methyltransferase.